Here is a 199-residue protein sequence, read N- to C-terminus: 3-isopropylmalate dehydratase small subunit (199 aa).

It belongs to the LeuD family. LeuD type 1 subfamily. Heterodimer of LeuC and LeuD.

The enzyme catalyses (2R,3S)-3-isopropylmalate = (2S)-2-isopropylmalate. The protein operates within amino-acid biosynthesis; L-leucine biosynthesis; L-leucine from 3-methyl-2-oxobutanoate: step 2/4. In terms of biological role, catalyzes the isomerization between 2-isopropylmalate and 3-isopropylmalate, via the formation of 2-isopropylmaleate. In Bacillus licheniformis (strain ATCC 14580 / DSM 13 / JCM 2505 / CCUG 7422 / NBRC 12200 / NCIMB 9375 / NCTC 10341 / NRRL NRS-1264 / Gibson 46), this protein is 3-isopropylmalate dehydratase small subunit.